Consider the following 1161-residue polypeptide: Cingulin (1161 aa).

The tract at residues 1–403 (MSSLSADRKP…SLIHERFCGV (403 aa)) is head. Disordered stretches follow at residues 29–53 (GGFP…SPSK), 79–309 (SYGV…LGRD), 649–678 (QSEL…KRET), 699–721 (SKAI…ESNL), 739–773 (RLHS…AASR), and 1123–1161 (QSRR…TTSC). Positions 51-65 (PSKYGVAVRVQGISG) match the ZIM motif. Composition is skewed to polar residues over residues 84–104 (LKTQ…SPYN) and 117–129 (PQGS…QPSS). Over residues 189–203 (NGIGSSLNGTGLNGS) the composition is skewed to low complexity. Residues 273-305 (EASSTSPTINPYAPNTSATVPKLNSTKPSSTGS) are compositionally biased toward polar residues. Residues 413–1128 (SNMKTELEQA…RKIQQSRRST (716 aa)) adopt a coiled-coil conformation. A compositionally biased stretch (low complexity) spans 742–751 (SSVPDSSSSD). Positions 755–773 (EENRSLKTQLEESRRAASR) are enriched in basic and acidic residues. The segment at 1122–1161 (QQSRRSTLGSTLSSDEEDNYSDTKSITSILTDSPLQTTSC) is tail. Low complexity predominate over residues 1124–1134 (SRRSTLGSTLS). The span at 1143–1161 (DTKSITSILTDSPLQTTSC) shows a compositional bias: polar residues.

Belongs to the cingulin family. In terms of assembly, homodimer.

The protein localises to the cell junction. It localises to the tight junction. Functionally, probably plays a role in the formation and regulation of the tight junction (TJ) paracellular permeability barrier. Note=Localizes to the apical junction complex composed of tight and adherens junctions. This chain is Cingulin, found in Danio rerio (Zebrafish).